Consider the following 175-residue polypeptide: Ribosome maturation factor RimM (175 aa).

Residues 99–171 enclose the PRC barrel domain; it reads AGEYYWFQLK…RILFDLPDGL (73 aa).

Belongs to the RimM family. Binds ribosomal protein uS19.

Its subcellular location is the cytoplasm. An accessory protein needed during the final step in the assembly of 30S ribosomal subunit, possibly for assembly of the head region. Essential for efficient processing of 16S rRNA. May be needed both before and after RbfA during the maturation of 16S rRNA. It has affinity for free ribosomal 30S subunits but not for 70S ribosomes. This chain is Ribosome maturation factor RimM, found in Syntrophotalea carbinolica (strain DSM 2380 / NBRC 103641 / GraBd1) (Pelobacter carbinolicus).